A 155-amino-acid polypeptide reads, in one-letter code: Small ribosomal subunit protein uS7cz/uS7cy (155 aa).

The protein belongs to the universal ribosomal protein uS7 family. Part of the 30S ribosomal subunit.

It is found in the plastid. It localises to the chloroplast. One of the primary rRNA binding proteins, it binds directly to 16S rRNA where it nucleates assembly of the head domain of the 30S subunit. The protein is Small ribosomal subunit protein uS7cz/uS7cy (rps7-A) of Vitis vinifera (Grape).